Reading from the N-terminus, the 486-residue chain is MNAHTGTVRGKERYRSGVMEYKRMGYWEPDYTPKDTDVIALFRVTPQEGVDPIEASAAVAGESSTATWTVVWTDRLTAAEKYRAKCHRVDPVPGTPGSYFAYIAYDLDLFEPGSIANLSASIIGNVFGFKPLKALRLEDMRFPVAYVKTFQGPATGIVVERERLDKFGRPLLGATVKPKLGLSGRNYGRVVYEALKGGLDFTKDDENINSQPFMHWRDRFLYCIEAVNRAQAASGEVKGTYLNITAGTMEDMYERAEFAKELGSCIVMIDLVIGYTAIQSMAKWARRNDMILHLHRAGHSTYTRQKSHGVSFRVIAKWMRLAGVDHIHAGTVVGKLEGDPNTTRGYYDVCREDFNPTKLEHGLFFDQSWASLNKMMPVASGGIHAGQMHQLLDLLGEDVVLQFGGGTIGHPMGIAAGAIANRVALEAMILARNEGRDYVHEGPEILAKAAQTCTPLKSALEVWKDVTFNYQSTDTPDFVPTALETV.

Residues asparagine 125 and threonine 175 each coordinate substrate. Catalysis depends on lysine 177, which acts as the Proton acceptor. Lysine 179 provides a ligand contact to substrate. Residues lysine 203, aspartate 205, and glutamate 206 each contribute to the Mg(2+) site. Lysine 203 is modified (N6-carboxylysine). Histidine 295 acts as the Proton acceptor in catalysis. Substrate contacts are provided by arginine 296, histidine 328, and serine 380.

The protein belongs to the RuBisCO large chain family. Type I subfamily. Heterohexadecamer of 8 large chains and 8 small chains. Mg(2+) serves as cofactor.

It carries out the reaction 2 (2R)-3-phosphoglycerate + 2 H(+) = D-ribulose 1,5-bisphosphate + CO2 + H2O. It catalyses the reaction D-ribulose 1,5-bisphosphate + O2 = 2-phosphoglycolate + (2R)-3-phosphoglycerate + 2 H(+). In terms of biological role, ruBisCO catalyzes two reactions: the carboxylation of D-ribulose 1,5-bisphosphate, the primary event in carbon dioxide fixation, as well as the oxidative fragmentation of the pentose substrate. Both reactions occur simultaneously and in competition at the same active site. This Bradyrhizobium diazoefficiens (strain JCM 10833 / BCRC 13528 / IAM 13628 / NBRC 14792 / USDA 110) protein is Ribulose bisphosphate carboxylase large chain.